A 289-amino-acid polypeptide reads, in one-letter code: Phosphatidylserine decarboxylase proenzyme (289 aa).

Active-site charge relay system; for autoendoproteolytic cleavage activity residues include D89, H146, and S252. S252 functions as the Schiff-base intermediate with substrate; via pyruvic acid; for decarboxylase activity in the catalytic mechanism. S252 bears the Pyruvic acid (Ser); by autocatalysis mark.

This sequence belongs to the phosphatidylserine decarboxylase family. PSD-B subfamily. Prokaryotic type I sub-subfamily. Heterodimer of a large membrane-associated beta subunit and a small pyruvoyl-containing alpha subunit. Requires pyruvate as cofactor. Post-translationally, is synthesized initially as an inactive proenzyme. Formation of the active enzyme involves a self-maturation process in which the active site pyruvoyl group is generated from an internal serine residue via an autocatalytic post-translational modification. Two non-identical subunits are generated from the proenzyme in this reaction, and the pyruvate is formed at the N-terminus of the alpha chain, which is derived from the carboxyl end of the proenzyme. The autoendoproteolytic cleavage occurs by a canonical serine protease mechanism, in which the side chain hydroxyl group of the serine supplies its oxygen atom to form the C-terminus of the beta chain, while the remainder of the serine residue undergoes an oxidative deamination to produce ammonia and the pyruvoyl prosthetic group on the alpha chain. During this reaction, the Ser that is part of the protease active site of the proenzyme becomes the pyruvoyl prosthetic group, which constitutes an essential element of the active site of the mature decarboxylase.

The protein resides in the cell membrane. The enzyme catalyses a 1,2-diacyl-sn-glycero-3-phospho-L-serine + H(+) = a 1,2-diacyl-sn-glycero-3-phosphoethanolamine + CO2. It functions in the pathway phospholipid metabolism; phosphatidylethanolamine biosynthesis; phosphatidylethanolamine from CDP-diacylglycerol: step 2/2. Its function is as follows. Catalyzes the formation of phosphatidylethanolamine (PtdEtn) from phosphatidylserine (PtdSer). The sequence is that of Phosphatidylserine decarboxylase proenzyme from Shewanella putrefaciens (strain CN-32 / ATCC BAA-453).